Here is a 523-residue protein sequence, read N- to C-terminus: MAPKKKPNKGGKEMQGKKIGGKKDASGTKTPELAMVEELKEFYHKQIQDLEDRLARYQRKWDELAVREKLFHQEFEQLANNKKEIVAFLKRTLNQKVDEITDLNDQLQSLEVAKDMEKDAFEAQLAQVRHEFQEIKDQLTTENIALGIKLSSLEEFRLQKEELTEKYLALEEQLHRQEGEYKEYVYNLEKKSVLDKDRLRKEIIQRVNLVATEFRKMATNQMWETTRRAILENNSVTLQLNKVSKHGVQLLQENEQLKGTQNKLCQQLEMLENTQEIMARKNIGHKKIILMLTEKCRQQRKGTEETEQLRLLLSQLEQNFQNVQRDNQTLRSEKDQLEAQLKEKQAEANRLQEELTKEQKIRANLKTVLIQATSMLQDIVHMQTEAEDGDFDVVFQLQRKELLQQLLVLLSSGVVLKTQPDMGSHQDKQPQGLSKESQRITQTSKEGAVSLLQQLSTITTYKPGDLGLVPRRPVRIPLKPQDLRPLSYITRMGICQNTNEIYPSGALKRFRKFTLPRPFLHRK.

The tract at residues 1–31 (MAPKKKPNKGGKEMQGKKIGGKKDASGTKTP) is disordered. Residues 10–26 (GGKEMQGKKIGGKKDAS) are compositionally biased toward basic and acidic residues. A Phosphothreonine modification is found at Thr-30. Coiled-coil stretches lie at residues 32–191 (ELAM…LEKK), 248–274 (VQLL…LENT), and 302–371 (GTEE…VLIQ). Residues 419-440 (QPDMGSHQDKQPQGLSKESQRI) are disordered. Residues 429 to 440 (QPQGLSKESQRI) show a composition bias toward polar residues.

The protein belongs to the CFAP157 family. Interacts with TUBB and TUBA4A. Interacts with CEP350. In terms of tissue distribution, specifically expressed in tissues containing motile cilia.

The protein resides in the cytoplasm. The protein localises to the cytoskeleton. It is found in the cilium basal body. Functionally, specifically required during spermatogenesis for flagellum morphogenesis and sperm motility. May be required to suppress the formation of supernumerary axonemes and ensure a correct ultrastructure. This Mus musculus (Mouse) protein is Cilia- and flagella-associated protein 157.